An 83-amino-acid chain; its full sequence is Neurotoxin LmNaTx3 (83 aa).

Positions 1-21 are cleaved as a signal peptide; sequence MQLKIQLLMLVLMIVLTDVYS. One can recognise an LCN-type CS-alpha/beta domain in the interval 22–83; that stretch reads KDGFIVSKKN…NIAMKNKNYC (62 aa). Cystine bridges form between Cys32-Cys83, Cys36-Cys59, Cys45-Cys64, and Cys49-Cys66.

The protein belongs to the long (4 C-C) scorpion toxin superfamily. Sodium channel inhibitor family. Alpha subfamily. Expressed by the venom gland.

Its subcellular location is the secreted. Binds voltage-independently at site-3 of voltage-gated sodium channels (Nav) and inhibits the inactivation of the activated channels, thereby blocking neuronal transmission. The chain is Neurotoxin LmNaTx3 from Lychas mucronatus (Chinese swimming scorpion).